Reading from the N-terminus, the 297-residue chain is Small ribosomal subunit protein uS2 (297 aa).

A disordered region spans residues Asp276–Trp297.

The protein belongs to the universal ribosomal protein uS2 family. Component of the small ribosomal subunit. Mature ribosomes consist of a small (40S) and a large (60S) subunit. The 40S subunit contains about 33 different proteins and 1 molecule of RNA (18S). The 60S subunit contains about 49 different proteins and 3 molecules of RNA (25S, 5.8S and 5S). Interacts with RPS21.

The protein resides in the cytoplasm. Its function is as follows. Required for the assembly and/or stability of the 40S ribosomal subunit. Required for the processing of the 20S rRNA-precursor to mature 18S rRNA in a late step of the maturation of 40S ribosomal subunits. The polypeptide is Small ribosomal subunit protein uS2 (Uncinocarpus reesii (strain UAMH 1704)).